Consider the following 83-residue polypeptide: MQIKVLYFAKSREVAGVNEQTFELGDGAHTEDLLAQIIAAHPALDSVMKTCVFALNQEYVRPQDKEALKDGDEVAIIPPLSGG.

Position 83 is a 1-thioglycine; alternate (Gly-83). Glycyl adenylate; alternate is present on Gly-83.

This sequence belongs to the MoaD family. MOCS2A subfamily. As to quaternary structure, heterotetramer; composed of 2 small (MOCS2A) and 2 large (MOCS2B) subunits. In terms of processing, C-terminal thiocarboxylation occurs in 2 steps, it is first acyl-adenylated (-COAMP) via the hesA/moeB/thiF part of MOCS3, then thiocarboxylated (-COSH) via the rhodanese domain of MOCS3.

The protein localises to the cytoplasm. It functions in the pathway cofactor biosynthesis; molybdopterin biosynthesis. Functionally, acts as a sulfur carrier required for molybdopterin biosynthesis. Component of the molybdopterin synthase complex that catalyzes the conversion of precursor Z into molybdopterin by mediating the incorporation of 2 sulfur atoms into precursor Z to generate a dithiolene group. In the complex, serves as sulfur donor by being thiocarboxylated (-COSH) at its C-terminus by MOCS3. After interaction with MOCS2B, the sulfur is then transferred to precursor Z to form molybdopterin. In Chlamydomonas reinhardtii (Chlamydomonas smithii), this protein is Molybdopterin synthase sulfur carrier subunit.